A 640-amino-acid polypeptide reads, in one-letter code: Chaperone protein HtpG (640 aa).

Residues 1–343 are a; substrate-binding; the sequence is MQTAENVEHL…SNDLPLNVSR (343 aa). A b region spans residues 344–564; the sequence is EILQESKDID…THDMSGNLGR (221 aa). Residues 565–640 are c; sequence LLKSAGQKVP…LLLQNILSGK (76 aa).

It belongs to the heat shock protein 90 family. In terms of assembly, homodimer.

The protein localises to the cytoplasm. Molecular chaperone. Has ATPase activity. The chain is Chaperone protein HtpG from Nitrosomonas eutropha (strain DSM 101675 / C91 / Nm57).